The primary structure comprises 134 residues: Lymphocyte antigen 6I (134 aa).

A signal peptide spans Met-1–Ala-21. The UPAR/Ly6 domain maps to Leu-27–Asn-105. Intrachain disulfides connect Cys-29-Cys-53, Cys-32-Cys-41, Cys-46-Cys-74, Cys-78-Cys-98, and Cys-99-Cys-104. N-linked (GlcNAc...) asparagine glycosylation is present at Asn-95. Gly-112 is lipidated: GPI-anchor amidated glycine. The propeptide at Ser-113 to Met-134 is removed in mature form.

Expressed in hematopoietic tissue (spleen, thymus, bone marrow). Also found in peritoneal macrophages, peripheral blood leukocytes, liver, heart, brain, kidney and lung.

The protein resides in the cell membrane. The polypeptide is Lymphocyte antigen 6I (Ly6i) (Mus musculus (Mouse)).